We begin with the raw amino-acid sequence, 701 residues long: Reverse gyrase subunit A (701 aa).

The Toprim domain occupies 41–197 (MVLFIVESPN…NIYRAEFHEV (157 aa)). Glu-47 provides a ligand contact to Mg(2+). The RG C-terminal-type zinc finger occupies 117–143 (IKKCLDCGHQFVDEDKCPRCGSENIDD). Zn(2+) contacts are provided by Cys-120, Cys-123, Cys-133, and Cys-136. Asp-166 is a binding site for Mg(2+). Positions 213–602 (NTNRVKAQLV…SFKKELIEIW (390 aa)) constitute a Topo IA-type catalytic domain. Tyr-352 serves as the catalytic O-(5'-phospho-DNA)-tyrosine intermediate.

This sequence belongs to the type IA topoisomerase family. As to quaternary structure, heterodimer of an RgyA and RgyB subunit. The cofactor is Zn(2+). Mg(2+) is required as a cofactor.

It is found in the cytoplasm. Its function is as follows. Modifies the topological state of DNA by introducing positive supercoils in an ATP-dependent process. Binds to single-stranded DNA, transiently cleaves and then rejoins the end, introducing a positive supercoil in the process. The scissile phosphodiester is attacked by the catalytic tyrosine of the enzyme, resulting in the formation of a DNA-(5'-phosphotyrosyl)-enzyme intermediate. Probably involved in rewinding DNA strands in regions of the chromosome that have opened up to allow replication, transcription, DNA repair or for DNA protection. Reconstituted holoenzyme binds dsDNA a bit better than ssDNA, this subunit preferentially binds ssDNA. In isolation this subunit relaxes negatively-supercoiled DNA, and stimulates the endogenous ATPase activity of the RgyB subunit. This Nanoarchaeum equitans (strain Kin4-M) protein is Reverse gyrase subunit A.